We begin with the raw amino-acid sequence, 100 residues long: MYB-like transcription factor TCL2 (100 aa).

The region spanning 37–74 is the Myb-like domain; the sequence is TEQEEDLIFRMHRLVGDRWDLIAGRVVGREAKDIERYW.

In terms of assembly, interacts with GL3. Expressed in cotyledons, petioles, rosette leaves, hydathodes, cauline leaves, stems, pedicels and flower buds.

The protein localises to the nucleus. Its function is as follows. MYB-type transcription factor involved in trichome cell specification. Acts as a negative regulator of trichome patterning and formation. May function by suppressing the expression of GL3. In Arabidopsis thaliana (Mouse-ear cress), this protein is MYB-like transcription factor TCL2 (TCL2).